The primary structure comprises 166 residues: Regulatory protein RecX (166 aa).

Belongs to the RecX family.

It is found in the cytoplasm. Its function is as follows. Modulates RecA activity. This Escherichia coli (strain SE11) protein is Regulatory protein RecX.